A 202-amino-acid chain; its full sequence is NADH-quinone oxidoreductase subunit C (202 aa).

Belongs to the complex I 30 kDa subunit family. As to quaternary structure, NDH-1 is composed of 14 different subunits. Subunits NuoB, C, D, E, F, and G constitute the peripheral sector of the complex.

Its subcellular location is the cell inner membrane. The enzyme catalyses a quinone + NADH + 5 H(+)(in) = a quinol + NAD(+) + 4 H(+)(out). Functionally, NDH-1 shuttles electrons from NADH, via FMN and iron-sulfur (Fe-S) centers, to quinones in the respiratory chain. The immediate electron acceptor for the enzyme in this species is believed to be ubiquinone. Couples the redox reaction to proton translocation (for every two electrons transferred, four hydrogen ions are translocated across the cytoplasmic membrane), and thus conserves the redox energy in a proton gradient. The sequence is that of NADH-quinone oxidoreductase subunit C from Acidovorax sp. (strain JS42).